A 171-amino-acid chain; its full sequence is UPF0725 protein At3g25080 (171 aa).

The protein belongs to the UPF0725 (EMB2204) family.

The chain is UPF0725 protein At3g25080 from Arabidopsis thaliana (Mouse-ear cress).